A 1786-amino-acid chain; its full sequence is Transcription initiation factor TFIID subunit 1b (1786 aa).

Disordered regions lie at residues 54–83 (EDYD…PVVL) and 350–372 (FGSR…PQLL). Over residues 61-83 (GQEKEHVPVEKSFDSEEREPVVL) the composition is skewed to basic and acidic residues. Positions 352-362 (SRGSQSTNEST) are enriched in polar residues. The 77-residue stretch at 574-650 (MTIVVKSLGG…VHLLRTKVHL (77 aa)) folds into the Ubiquitin-like domain. Residues 1303 to 1313 (MKTNKHCPKYR) show a composition bias toward basic residues. 3 disordered regions span residues 1303-1382 (MKTN…DVAA), 1397-1471 (LKIS…KDQA), and 1596-1634 (SERE…ESGQ). Residues 1357–1377 (TKISVNEATKVGDSTSKTPGS) show a composition bias toward polar residues. Positions 1397-1407 (LKISSKAKPKA) are enriched in basic residues. A compositionally biased stretch (polar residues) spans 1433-1464 (HNPSVSGQLLPSTETDQAASSRYTTSVPQPSL). 2 coiled-coil regions span residues 1591 to 1620 (REVI…LENY) and 1752 to 1786 (LADE…DSLR). Residues 1604–1613 (RKAKQKKKLQ) are compositionally biased toward basic residues. The region spanning 1656-1774 (KRRKKGQVGL…DEYRDELKEA (119 aa)) is the Bromo domain.

The protein belongs to the TAF1 family. As to quaternary structure, component of the TFIID complex. TFIID is composed of TATA binding protein (TBP) and a number of TBP-associated factors (TAFs) whose MWs range from 14-217 kDa. In terms of tissue distribution, expressed in roots, shoots, leaves and inflorescences.

Its subcellular location is the nucleus. TAFs are components of the transcription factor IID (TFIID) complex that is essential for mediating regulation of RNA polymerase transcription. Core scaffold of the TFIID complex. Acts as a histone acetyltransferase involved in the light regulation of growth and gene expression. Required for H3K9, H3K27, and H4K12 acetylation on the target promoters. In Arabidopsis thaliana (Mouse-ear cress), this protein is Transcription initiation factor TFIID subunit 1b (TAF1B).